The following is an 856-amino-acid chain: DNA endonuclease RBBP8 (856 aa).

The tract at residues 25-48 (ELWSKLKECHDKDLQELLMKIGKL) is essential for binding to the MRN complex and for RPA focus formation on DNA damage. 2 coiled-coil regions span residues 38-87 (LQEL…EDRL) and 120-141 (ITEL…SEQL). Disordered regions lie at residues 143–174 (DMQK…DSPL) and 423–456 (DSEQ…DKEN). Positions 156–168 (ENPADTGDGEDGV) are enriched in acidic residues. The segment at 493 to 515 (SSSRTKLTISLVPEKPDTKTILH) is damage-recruitment motif. The segment at 695-732 (SPSQSISCKERSDIPSIENKKITSEKEHESKGEPYQKQ) is disordered. Basic and acidic residues predominate over residues 702–730 (CKERSDIPSIENKKITSEKEHESKGEPYQ). T806 is modified (phosphothreonine). A Phosphothreonine; by ATR modification is found at T818.

This sequence belongs to the COM1/SAE2/CtIP family. Homotetramer; formed by antiparallel association of helical extensions protruding from the N-termini of two parallel coiled-coil dimers. Interacts with the MRN complex; the interaction links DNA sensing to resection. Interacts with samhd1. Post-translationally, phosphorylation at Thr-818 by atr promotes recruitment to double-strand breaks (DSBs).

It is found in the nucleus. The protein localises to the chromosome. Functionally, endonuclease that cooperates with the MRE11-RAD50-NBN (MRN) complex in DNA-end resection, the first step of double-strand break (DSB) repair through the homologous recombination (HR) pathway. Functions downstream of the MRN complex and ATM, promotes ATR activation and its recruitment to DSBs in the S/G2 phase facilitating the generation of ssDNA. Specifically promotes the endonuclease activity of the MRN complex to clear DNA ends containing protein adducts: recruited to DSBs by nbn following phosphorylation, and promotes the endonuclease of mre11 to clear protein-DNA adducts and generate clean double-strand break ends. The MRN complex and rbbp8/CtIP are also required for chromosome alignment during metaphase. The polypeptide is DNA endonuclease RBBP8 (rbbp8) (Xenopus laevis (African clawed frog)).